The primary structure comprises 272 residues: NADPH-dependent 7-cyano-7-deazaguanine reductase (272 aa).

A substrate-binding site is contributed by 80 to 82 (VES). 82–83 (SK) serves as a coordination point for NADPH. C178 acts as the Thioimide intermediate in catalysis. D185 (proton donor) is an active-site residue. 217–218 (AE) provides a ligand contact to substrate. Position 246–247 (246–247 (RG)) interacts with NADPH.

The protein belongs to the GTP cyclohydrolase I family. QueF type 2 subfamily. As to quaternary structure, homodimer.

Its subcellular location is the cytoplasm. It catalyses the reaction 7-aminomethyl-7-carbaguanine + 2 NADP(+) = 7-cyano-7-deazaguanine + 2 NADPH + 3 H(+). Its pathway is tRNA modification; tRNA-queuosine biosynthesis. Its function is as follows. Catalyzes the NADPH-dependent reduction of 7-cyano-7-deazaguanine (preQ0) to 7-aminomethyl-7-deazaguanine (preQ1). The protein is NADPH-dependent 7-cyano-7-deazaguanine reductase of Rickettsia typhi (strain ATCC VR-144 / Wilmington).